The primary structure comprises 126 residues: MKFSRDVTSSRRKQRKAHFGAPSSVRRVLMSAPLSKELREQYKIRSLPVRRDDQITVIRGSNKGREGKITSVYRKKFLLLIERVTREKANGASAPVGIDASKVVITKLHLDKDRKDLIVRKGGKVE.

The disordered stretch occupies residues 1-23 (MKFSRDVTSSRRKQRKAHFGAPS).

The protein belongs to the universal ribosomal protein uL24 family. As to quaternary structure, component of the large ribosomal subunit (LSU). Mature yeast ribosomes consist of a small (40S) and a large (60S) subunit. The 40S small subunit contains 1 molecule of ribosomal RNA (18S rRNA) and at least 33 different proteins. The large 60S subunit contains 3 rRNA molecules (25S, 5.8S and 5S rRNA) and at least 46 different proteins.

It localises to the cytoplasm. The protein resides in the nucleus. The protein localises to the nucleolus. Functionally, component of the ribosome, a large ribonucleoprotein complex responsible for the synthesis of proteins in the cell. The small ribosomal subunit (SSU) binds messenger RNAs (mRNAs) and translates the encoded message by selecting cognate aminoacyl-transfer RNA (tRNA) molecules. The large subunit (LSU) contains the ribosomal catalytic site termed the peptidyl transferase center (PTC), which catalyzes the formation of peptide bonds, thereby polymerizing the amino acids delivered by tRNAs into a polypeptide chain. The nascent polypeptides leave the ribosome through a tunnel in the LSU and interact with protein factors that function in enzymatic processing, targeting, and the membrane insertion of nascent chains at the exit of the ribosomal tunnel. The protein is Large ribosomal subunit protein uL24 (rpl26) of Schizosaccharomyces pombe (strain 972 / ATCC 24843) (Fission yeast).